We begin with the raw amino-acid sequence, 172 residues long: MSVDPLSSKALKIKRELSENTPHLSDEALMGLSVRELNRHLRGLSAEEVTRLKQRRRTLKNRGYAASCRVKRVCQKEELQKQKSELEREVDKLARENAAMRLELDALRGKCEALQGFARSVAAARGPAALVAPASVITIVKSAPSPGPGPAPGPGPASGPGPAPGPAPAACS.

The tract at residues 51–76 (RLKQRRRTLKNRGYAASCRVKRVCQK) is basic motif. The region spanning 51 to 114 (RLKQRRRTLK…DALRGKCEAL (64 aa)) is the bZIP domain. Positions 79–93 (LQKQKSELEREVDKL) are leucine-zipper. The interval 140–172 (VKSAPSPGPGPAPGPGPASGPGPAPGPAPAACS) is disordered. The span at 145–172 (SPGPGPAPGPGPASGPGPAPGPAPAACS) shows a compositional bias: pro residues.

This sequence belongs to the bZIP family. Maf subfamily. In terms of assembly, monomer and homo- or heterodimer. Interacts with MIP. Forms high affinity heterodimers with members of the CNC-bZIP family such as NFE2L1/NRF1.

It localises to the nucleus. Functionally, since they lack a putative transactivation domain, the small Mafs behave as transcriptional repressors when they dimerize among themselves. However, they seem to serve as transcriptional activators by dimerizing with other (usually larger) basic-zipper proteins, such as NFE2L1/NRF1, and recruiting them to specific DNA-binding sites. Interacts with the upstream promoter region of the oxytocin receptor gene. May be a transcriptional enhancer in the up-regulation of the oxytocin receptor gene at parturition. The chain is Transcription factor MafF (MAFF) from Bos taurus (Bovine).